We begin with the raw amino-acid sequence, 76 residues long: UPF0352 protein ECA2748 (76 aa).

This sequence belongs to the UPF0352 family.

This Pectobacterium atrosepticum (strain SCRI 1043 / ATCC BAA-672) (Erwinia carotovora subsp. atroseptica) protein is UPF0352 protein ECA2748.